The sequence spans 317 residues: Cytochrome f (317 aa).

An N-terminal signal peptide occupies residues 1 to 34 (MINFKKQIMKKTTFFLCAMLLVSSILIAPRSSLA). Heme is bound by residues Tyr35, Cys55, Cys58, and His59. The chain crosses the membrane as a helical span at residues 284 to 304 (IIGLIAFFIGVGLTQILLVLK).

It belongs to the cytochrome f family. The 4 large subunits of the cytochrome b6-f complex are cytochrome b6, subunit IV (17 kDa polypeptide, PetD), cytochrome f and the Rieske protein, while the 4 small subunits are PetG, PetL, PetM and PetN. The complex functions as a dimer. It depends on heme as a cofactor.

It localises to the cellular thylakoid membrane. Component of the cytochrome b6-f complex, which mediates electron transfer between photosystem II (PSII) and photosystem I (PSI), cyclic electron flow around PSI, and state transitions. This is Cytochrome f from Prochlorococcus marinus (strain MIT 9515).